Reading from the N-terminus, the 677-residue chain is MSEPRKILVTSALPYANGSIHLGHMLEYIQTDMWVRFQKMRGNQAVYVCADDAHGSAIMLRAEREGITSEQLIDAVRAEHMGDFADFLVDFDNYHSTHSEENRELSSAIYLKLRDAGHIDTRPVTQYFDPEKQMFLADRFIKGTCPKCGTADQYGDNCEACGATYAPTELKDPKSAISGATPVLKESLHYFFKLPDFEAMLKQWTRSGALQESVANKLAEWLDSGLQQWDISRDAPYFGFEIPDAPGKYFYVWLDAPIGYMASFKNLCARRPELDFDAFWGKDSSAELYHFIGKDIVNFHALFWPAMLEGAGYRKPTALNVHGYLTVNGQKMSKSRGTFVKARTYLDHLDPEYLRYYYASKLGRGVEDLDLNLEDFVQKVNSDLVGKVVNIASRCAGFIHKGNAGVLVGADPAPELLAAFREAAPGIAEAYEARDFNRAMREIMALADRANAWIAEQAPWALAKQEGQQDKVQAVCGLGINLFRQLVIFLKPVLPKLAAAAEAFLNVAPLTWADHRTLLANHQLNPFQPLMTRIEPAKVEAMIEASKEDLAAASQPAGNGELVKEPIAAEIDFDAFAAVDLRIALIEKCEFVEGADKLLRLSLDIGDAKRNVFSGIKSAYPDPSALEGRLTLYVANLAPRKMKFGVSEGMVLAAGPGGEEIYLLSPDSGAKPGQRVK.

Residues 14–24 (PYANGSIHLGH) carry the 'HIGH' region motif. The Zn(2+) site is built by Cys145, Cys148, Cys158, and Cys161. The short motif at 331–335 (KMSKS) is the 'KMSKS' region element. An ATP-binding site is contributed by Lys334. In terms of domain architecture, tRNA-binding spans 575–677 (AFAAVDLRIA…SGAKPGQRVK (103 aa)).

Belongs to the class-I aminoacyl-tRNA synthetase family. MetG type 1 subfamily. In terms of assembly, homodimer. The cofactor is Zn(2+).

The protein resides in the cytoplasm. It carries out the reaction tRNA(Met) + L-methionine + ATP = L-methionyl-tRNA(Met) + AMP + diphosphate. In terms of biological role, is required not only for elongation of protein synthesis but also for the initiation of all mRNA translation through initiator tRNA(fMet) aminoacylation. This is Methionine--tRNA ligase from Pseudomonas aeruginosa (strain LESB58).